A 4753-amino-acid polypeptide reads, in one-letter code: Dynein heavy chain domain-containing protein 1 (4753 aa).

2 coiled-coil regions span residues 826-858 (IHAI…ALHE) and 936-991 (KLQQ…LSEL). Positions 2688–2766 (HLGKDHQESE…SRGMKESISH (79 aa)) are disordered. Acidic residues predominate over residues 2695-2712 (ESEEEEEEERVPEVESEG). Residues 2740–2751 (RVSNSRDPSLTP) are compositionally biased toward polar residues. Coiled coils occupy residues 3125-3227 (LQQQ…MSKA), 3590-3651 (MRNQ…QGSK), and 4431-4460 (GAQL…LTHV). The segment at 3580-3657 (ALTEGRGKGL…QGSKPAYETQ (78 aa)) is disordered. Over residues 3602 to 3615 (KEEDDESEESNEAE) the composition is skewed to acidic residues. Residues 3616–3631 (DQTKEQKAEERKNEQE) show a composition bias toward basic and acidic residues. Residues 3632-3641 (KEQEENEEKE) show a composition bias toward acidic residues. The disordered stretch occupies residues 4669-4697 (ALQDSPSSQPSPLPPVSISTQAPGTSDLP).

It belongs to the dynein heavy chain family. In terms of tissue distribution, expressed in spermatozoa (at protein level).

The protein resides in the cell projection. It is found in the cilium. The protein localises to the flagellum. Essential for the normal assembly and function of sperm flagella axonemes. The polypeptide is Dynein heavy chain domain-containing protein 1 (DNHD1) (Homo sapiens (Human)).